Here is a 250-residue protein sequence, read N- to C-terminus: Manganese transport system ATP-binding protein MntB (250 aa).

The ABC transporter domain maps to 4–236 (VELDNVTVAY…NLQKTYGGRL (233 aa)). Position 36-43 (36-43 (GPNGAGKS)) interacts with ATP.

It belongs to the ABC transporter superfamily. As to quaternary structure, the complex is probably composed of two ATP-binding proteins (MntB), two transmembrane proteins (MntC and MntD) and a solute-binding protein (MntA).

It is found in the cell membrane. Functionally, probably part of the ABC transporter complex MntABCD involved in manganese import. Probably responsible for energy coupling to the transport system. This is Manganese transport system ATP-binding protein MntB from Bacillus subtilis (strain 168).